Here is a 422-residue protein sequence, read N- to C-terminus: ATP-dependent RNA helicase RhlB (422 aa).

The Q motif signature appears at 9–37 (QKFSDFALHPLVIKAIENQGFYHCTPIQA). Residues 40–219 (FPITLAGRDV…FEQMNHPEYI (180 aa)) enclose the Helicase ATP-binding domain. 53 to 60 (AQTGTGKT) serves as a coordination point for ATP. The short motif at 165-168 (DEAD) is the DEAD box element. Positions 245-390 (RLLQTLIEEE…TSEYNKEALL (146 aa)) constitute a Helicase C-terminal domain. Residues 394-422 (PQPKRLQRHHRHYAGSRNQGASRKPRSPQ) form a disordered region. Residues 398 to 407 (RLQRHHRHYA) are compositionally biased toward basic residues.

This sequence belongs to the DEAD box helicase family. RhlB subfamily. Component of the RNA degradosome, which is a multiprotein complex involved in RNA processing and mRNA degradation.

It is found in the cytoplasm. It carries out the reaction ATP + H2O = ADP + phosphate + H(+). Its function is as follows. DEAD-box RNA helicase involved in RNA degradation. Has RNA-dependent ATPase activity and unwinds double-stranded RNA. The polypeptide is ATP-dependent RNA helicase RhlB (Hamiltonella defensa subsp. Acyrthosiphon pisum (strain 5AT)).